The sequence spans 304 residues: Proline dehydrogenase 2 (304 aa).

Lys-97 provides a ligand contact to substrate. Asp-131 is a catalytic residue. FAD-binding residues include Met-132 and Gln-160. The active site involves Arg-181. FAD contacts are provided by residues 184-186 and 223-224; these read KGA and TH. A substrate-binding site is contributed by 285–286; that stretch reads RR.

The protein belongs to the proline dehydrogenase family. Requires FAD as cofactor.

The catalysed reaction is L-proline + a quinone = (S)-1-pyrroline-5-carboxylate + a quinol + H(+). The protein operates within amino-acid degradation; L-proline degradation into L-glutamate; L-glutamate from L-proline: step 1/2. Functionally, converts proline to delta-1-pyrroline-5-carboxylate. In Bacillus subtilis subsp. natto, this protein is Proline dehydrogenase 2.